Consider the following 264-residue polypeptide: MKKLKLHGFNNLTKSLSFCIYDICYAKTAEERDGYIAYIDELYNANRLTEILTETCSIIGANILNIARQDYEPQGASVTILVSEEPVDPKLIDQTEHPGPLPETVVAHLDKSHICVHTYPESHPEGGLCTFRADIEVSTCGVISPLKALNYLIHQLESDIVTIDYRVRGFTRDINGMKHFIDHEINSIQNFMSDDMKSLYDMVDVNVYQENIFHTKMLLKEFDLKHYMFHTRPEELTAEERKVITDLLWKEMREIYYGRNIPAV.

Serine 112 serves as the catalytic Schiff-base intermediate with substrate; via pyruvic acid. Position 112 is a pyruvic acid (Ser); by autocatalysis (serine 112). Residue histidine 117 is the Proton acceptor; for processing activity of the active site. Catalysis depends on cysteine 140, which acts as the Proton donor; for catalytic activity.

Belongs to the prokaryotic AdoMetDC family. Type 2 subfamily. As to quaternary structure, heterooctamer of four alpha and four beta chains arranged as a tetramer of alpha/beta heterodimers. Pyruvate is required as a cofactor. In terms of processing, is synthesized initially as an inactive proenzyme. Formation of the active enzyme involves a self-maturation process in which the active site pyruvoyl group is generated from an internal serine residue via an autocatalytic post-translational modification. Two non-identical subunits are generated from the proenzyme in this reaction, and the pyruvate is formed at the N-terminus of the alpha chain, which is derived from the carboxyl end of the proenzyme. The post-translation cleavage follows an unusual pathway, termed non-hydrolytic serinolysis, in which the side chain hydroxyl group of the serine supplies its oxygen atom to form the C-terminus of the beta chain, while the remainder of the serine residue undergoes an oxidative deamination to produce ammonia and the pyruvoyl group blocking the N-terminus of the alpha chain.

It carries out the reaction S-adenosyl-L-methionine + H(+) = S-adenosyl 3-(methylsulfanyl)propylamine + CO2. Its pathway is amine and polyamine biosynthesis; S-adenosylmethioninamine biosynthesis; S-adenosylmethioninamine from S-adenosyl-L-methionine: step 1/1. Its function is as follows. Catalyzes the decarboxylation of S-adenosylmethionine to S-adenosylmethioninamine (dcAdoMet), the propylamine donor required for the synthesis of the polyamines spermine and spermidine from the diamine putrescine. This chain is S-adenosylmethionine decarboxylase proenzyme, found in Klebsiella pneumoniae subsp. pneumoniae (strain ATCC 700721 / MGH 78578).